Consider the following 636-residue polypeptide: Polyadenylate-binding protein 1 (636 aa).

Methionine 1 bears the N-acetylmethionine mark. 4 consecutive RRM domains span residues 11–89 (ASLY…WSQR), 99–175 (GNIF…RFKS), 191–268 (TNVY…RAQK), and 294–370 (VNLY…LAQR). The segment at 166-289 (RKVFVGRFKS…FEQMKQDRIT (124 aa)) is CSDE1-binding. N6-methyllysine is present on lysine 299. Serine 315 is subject to Phosphoserine. Threonine 319 carries the phosphothreonine modification. An omega-N-methylarginine mark is found at arginine 385, arginine 419, arginine 432, and arginine 436. Arginine 455 and arginine 460 each carry omega-N-methylated arginine; by CARM1. Arginine 475 and arginine 481 each carry omega-N-methylarginine. Residue arginine 493 is modified to Asymmetric dimethylarginine; alternate. Arginine 493 is subject to Dimethylated arginine; alternate. Arginine 493 bears the Omega-N-methylarginine; alternate mark. The residue at position 506 (arginine 506) is an Omega-N-methylarginine. An N6-acetyllysine modification is found at lysine 512. Position 518 is an omega-N-methylarginine (arginine 518). The region spanning 542 to 619 (QEPLTASMLA…AVAVLQAHQA (78 aa)) is the PABC domain.

This sequence belongs to the polyadenylate-binding protein type-1 family. In terms of assembly, may form homodimers. Component of a multisubunit autoregulatory ribonucleoprotein complex (ARC), at least composed of IGF2BP1, PABPC1 and CSDE1. Directly interacts with IGF2BP1. Part of a complex associated with the FOS mCRD domain and consisting of HNRPD, SYNCRIP, PAIP1 and CSDE1/UNR. Interacts with PAIP1 and PAIP2 (via the PABPC1-interacting motifs PAM1 and PAM2). Interacts with PAIP1 with a 1:1 stoichiometry and with PAIP2 with a 1:2 stoichiometry. The interaction with CSDE1 is direct and RNA-independent. Found in a mRNP complex with YBX2. Interacts with TENT2/GLD2. Identified in the spliceosome C complex. Identified in a mRNP complex, at least composed of DHX9, DDX3X, ELAVL1, HNRNPU, IGF2BP1, ILF3, PABPC1, PCBP2, PTBP2, STAU1, STAU2, SYNCRIP and YBX1. The interaction with DDX3X is direct and RNA-independent. This interaction increases in stressed cells and decreases during cell recovery. Identified in a IGF2BP1-dependent mRNP granule complex containing untranslated mRNAs. Interacts with NXF1/TAP. Interacts with PIWIL1. Interacts with AGO1, AGO2, GSPT1 and GSPT2. Interacts with LARP4B. Interacts (via the second and third RRM domains and the C-terminus) with PAIP2B (via central acidic portion and C-terminus). Forms a complex with LARP1 and SHFL. Interacts with LARP4. Interacts with ZFC3H1 in a RNase-sensitive manner. Interacts with TRIM71 (via NHL repeats) in an RNA-dependent manner. Interacts with TENT5C; the interaction has no effect on TENT5C poly(A) polymerase function. Interacts with G3BP1 and G3BP2. Interacts with ENDOV; the interaction is RNA-dependent and stimulates ENDOV activity. Interacts with UPF1; the interaction is RNA-dependent. Interacts with IGF2BP2 and IGF2BP3. May interact with SETX. Interacts with RBM46. Interacts with PAN3. Phosphorylated by MAPKAPK2. In terms of processing, methylated by CARM1. Arg-493 is dimethylated, probably to asymmetric dimethylarginine.

It localises to the cytoplasm. It is found in the stress granule. The protein localises to the nucleus. The protein resides in the cell projection. Its subcellular location is the lamellipodium. Binds the poly(A) tail of mRNA, including that of its own transcript, and regulates processes of mRNA metabolism such as pre-mRNA splicing and mRNA stability. Its function in translational initiation regulation can either be enhanced by PAIP1 or repressed by PAIP2. Can probably bind to cytoplasmic RNA sequences other than poly(A) in vivo. Binds to N6-methyladenosine (m6A)-containing mRNAs and contributes to MYC stability by binding to m6A-containing MYC mRNAs. Involved in translationally coupled mRNA turnover. Implicated with other RNA-binding proteins in the cytoplasmic deadenylation/translational and decay interplay of the FOS mRNA mediated by the major coding-region determinant of instability (mCRD) domain. Involved in regulation of nonsense-mediated decay (NMD) of mRNAs containing premature stop codons; for the recognition of premature termination codons (PTC) and initiation of NMD a competitive interaction between UPF1 and PABPC1 with the ribosome-bound release factors is proposed. By binding to long poly(A) tails, may protect them from uridylation by ZCCHC6/ZCCHC11 and hence contribute to mRNA stability. In Pongo abelii (Sumatran orangutan), this protein is Polyadenylate-binding protein 1 (PABPC1).